Here is a 196-residue protein sequence, read N- to C-terminus: Probable GTP-binding protein EngB (196 aa).

An EngB-type G domain is found at 22 to 195; it reads KLPEVALAGR…WNWIESITKV (174 aa). Residues 30–37, 57–61, 75–78, 142–145, and 174–176 each bind GTP; these read GRSNVGKS, GKTQT, DVPG, TKID, and FSA. Residues Ser-37 and Thr-59 each coordinate Mg(2+).

The protein belongs to the TRAFAC class TrmE-Era-EngA-EngB-Septin-like GTPase superfamily. EngB GTPase family. Mg(2+) serves as cofactor.

Functionally, necessary for normal cell division and for the maintenance of normal septation. This is Probable GTP-binding protein EngB from Ligilactobacillus salivarius (strain UCC118) (Lactobacillus salivarius).